A 347-amino-acid polypeptide reads, in one-letter code: Transcription factor JunD (347 aa).

Residues 1 to 46 are disordered; it reads METPFYGDEALSGLGGGGSSSGGGGSFASPGRLFPGAPPTAAPGSM. The segment covering 13–26 has biased composition (gly residues); that stretch reads GLGGGGSSSGGGGS. Positions 29 to 41 match the Menin-binding motif (MBM) motif; the sequence is SPGRLFPGAPPTA. Positions 48 to 57 match the MAP kinase docking motif; essential for its phosphorylation motif; that stretch reads KKDALTLSLS. The disordered stretch occupies residues 63–91; it reads ALKPAAAPPPGPLRTDGAPGTAPPDGLLA. Phosphoserine is present on serine 92. The residue at position 102 (serine 102) is a Phosphoserine; by MAPK8. Residue threonine 119 is modified to Phosphothreonine. Disordered regions lie at residues 164 to 183 and 218 to 264; these read AAAG…SELA and EPVP…IDMD. The span at 220-231 shows a compositional bias: pro residues; the sequence is VPFPPPPPPGTL. 3 positions are modified to phosphoserine: serine 251, serine 255, and serine 259. Residues 268-295 are basic motif; the sequence is RIKAERKRLRNRIAASKCRKRKLERISR. Residues 268-331 enclose the bZIP domain; it reads RIKAERKRLR…AQLKQKVLSH (64 aa). The segment at 296-324 is leucine-zipper; that stretch reads LEEKVKTLKSQNTELASTASLLREQVAQL.

The protein belongs to the bZIP family. Jun subfamily. As to quaternary structure, heterodimer; binds DNA as a heterodimer. Component of an AP-1 transcription factor complex composed of JUN-FOS heterodimers. As part of the AP-1 transcription factor complex, forms heterodimers with FOS proteins, thereby binding to the AP-1 consensus sequence and stimulating transcription. Forms heterodimers with FOSB; thereby binding to the AP-1 consensus sequence. Interacts (via MBM motif) with MEN1; this interaction represses transcriptional activation. Interacts with MAPK10; this interaction is inhibited in the presence of MEN1. Phosphorylated by MAP kinases MAPK8 and MAPK10; phosphorylation is inhibited in the presence of MEN1.

Its subcellular location is the nucleus. Its function is as follows. Transcription factor binding AP-1 sites. Heterodimerizes with proteins of the FOS family to form an AP-1 transcription factor complex, thereby enhancing their DNA binding activity to an AP-1 consensus sequence 3'-TGA[GC]TCA-5' and enhancing their transcriptional activity. The chain is Transcription factor JunD (JUND) from Bos taurus (Bovine).